A 762-amino-acid polypeptide reads, in one-letter code: Polyribonucleotide nucleotidyltransferase (762 aa).

Mg(2+)-binding residues include D531 and D537. One can recognise a KH domain in the interval 597–656 (PRVTTIKVPVDKIGEVIGPKGKVINSITEETRAQISIEDDGTVFVGATDGPSAQAAIDKI). The S1 motif domain occupies 668–737 (GERFLGTVVK…KRGKISLVLV (70 aa)).

The protein belongs to the polyribonucleotide nucleotidyltransferase family. It depends on Mg(2+) as a cofactor.

The protein localises to the cytoplasm. It catalyses the reaction RNA(n+1) + phosphate = RNA(n) + a ribonucleoside 5'-diphosphate. In terms of biological role, involved in mRNA degradation. Catalyzes the phosphorolysis of single-stranded polyribonucleotides processively in the 3'- to 5'-direction. This chain is Polyribonucleotide nucleotidyltransferase, found in Mycobacterium ulcerans (strain Agy99).